Consider the following 118-residue polypeptide: V-type proton ATPase subunit F (118 aa).

The protein belongs to the V-ATPase F subunit family. V-ATPase is a heteromultimeric enzyme composed of a peripheral catalytic V1 complex (components A to H) attached to an integral membrane V0 proton pore complex (components: a, c, c', c'', d, e, f and VOA1).

Its subcellular location is the vacuole membrane. Functionally, subunit of the V1 complex of vacuolar(H+)-ATPase (V-ATPase), a multisubunit enzyme composed of a peripheral complex (V1) that hydrolyzes ATP and a membrane integral complex (V0) that translocates protons. V-ATPase is responsible for acidifying and maintaining the pH of intracellular compartments. This is V-type proton ATPase subunit F from Saccharomyces cerevisiae (strain ATCC 204508 / S288c) (Baker's yeast).